A 6668-amino-acid polypeptide reads, in one-letter code: Centrosome-associated protein CEP250 (6668 aa).

Coiled coils occupy residues 562 to 589 (KAFH…LQQD), 632 to 666 (TREL…LRAS), 873 to 988 (HTEC…LRSS), 1042 to 1087 (LRMS…HEAA), 1252 to 1307 (VEDL…AVSR), 1333 to 1427 (LESL…LEKK), 1501 to 1538 (RPAA…LGTQ), 1594 to 1688 (REAL…SEVA), 1896 to 1930 (HDIL…TTEK), 1975 to 2224 (EETL…AKQS), 2298 to 3272 (AEDE…LKME), 3298 to 3436 (QQEL…SRAE), 3526 to 3599 (LVQL…AKEE), 3697 to 3773 (CASL…EERR), 3856 to 4137 (TEML…VEAE), 4170 to 4486 (RRKL…LRER), 4515 to 5078 (LETL…FRRR), 5165 to 5202 (LASL…QETL), 5298 to 5731 (LREK…QHRV), and 5927 to 6119 (TQAL…LWRQ).

Post-translationally, proteolytically cleaved; only the full-length form localizes to the inner core, while processed version also localizes to the outer core during the onset of cell division.

It is found in the cytoplasm. The protein localises to the cytoskeleton. The protein resides in the microtubule organizing center. Its subcellular location is the centrosome. In terms of biological role, part of the centrosome inner core complex. Required for the linking of centrosomal inner and outer cores. In Toxoplasma gondii (strain ATCC 50611 / Me49), this protein is Centrosome-associated protein CEP250.